The primary structure comprises 325 residues: NADH-quinone oxidoreductase subunit H (325 aa).

The next 8 helical transmembrane spans lie at 11–31 (ILIS…CGAF), 81–101 (VIFT…FAIV), 114–134 (IGIL…LFAG), 149–169 (ASAQ…GVVA), 186–206 (MWNV…GVAV), 237–257 (FFVG…TLFF), 265–285 (LPPF…FILI), and 304–324 (VCLP…LYNA).

This sequence belongs to the complex I subunit 1 family. As to quaternary structure, NDH-1 is composed of 13 different subunits. Subunits NuoA, H, J, K, L, M, N constitute the membrane sector of the complex.

Its subcellular location is the cell inner membrane. It carries out the reaction a quinone + NADH + 5 H(+)(in) = a quinol + NAD(+) + 4 H(+)(out). NDH-1 shuttles electrons from NADH, via FMN and iron-sulfur (Fe-S) centers, to quinones in the respiratory chain. The immediate electron acceptor for the enzyme in this species is believed to be ubiquinone. Couples the redox reaction to proton translocation (for every two electrons transferred, four hydrogen ions are translocated across the cytoplasmic membrane), and thus conserves the redox energy in a proton gradient. This subunit may bind ubiquinone. In Serratia proteamaculans (strain 568), this protein is NADH-quinone oxidoreductase subunit H.